Reading from the N-terminus, the 766-residue chain is Tripartite terminase subunit 1 (766 aa).

The segment at 191–219 (CSVCFEELCVTANQGEAVHRRLLECTCDH) adopts a C3H1-type zinc-finger fold. 683–690 (FSSVFHCG) lines the ATP pocket.

The protein belongs to the herpesviridae TRM1 protein family. As to quaternary structure, associates with TRM2 and TRM3 to form the tripartite terminase complex. Interacts with portal protein.

The protein resides in the host nucleus. In terms of biological role, component of the molecular motor that translocates viral genomic DNA in empty capsid during DNA packaging. Forms a tripartite terminase complex together with TRM2 and TRM3 in the host cytoplasm. Once the complex reaches the host nucleus, it interacts with the capsid portal vertex. This portal forms a ring in which genomic DNA is translocated into the capsid. TRM1 carries an endonuclease activity that plays an important role for the cleavage of concatemeric viral DNA into unit length genomes. This chain is Tripartite terminase subunit 1, found in Equus caballus (Horse).